Reading from the N-terminus, the 479-residue chain is MNYLPIFLDLRDRHCLVVGGSETAARKAELLLRAGAHVAVAAPALHAGFEQLPDRQRLTRVADTFSPALLDGKDAVIVVEDDAAAAQIVADAARARHLPVNVADKPALCSFILPSIIDRSPIMVAVSSGGESPVLARLLRARLETLIPAAYGRLSALASRYKARVREAIQPGQRRAFWEKVFLSSVAEMVFSGRDSEAEAQLEAMIKDSAAHEPARGEVYLVGAGPGNPDLLTFRALRLMQQADVVVYDRLVSQPILDMCRRDAERIYVGKERDDHAVPQEEINMMLVRLAKEGKRTLRLKGGDPFIFGRGGEEIETLVEHGVAFQVVPGITAAAGVASYAGIPLTHRDYAQSVAFVTGHLKENTFNMNWEGIARRDQTIVIYMGLKGLPMLCEALIKHGLTADTPAAIVQHGTLPTQRVITGTLATLPTLAVEAGLKAPTLIIVGNVVKLREKLAWYRPQAAGEAAAATPLEAPDHLA.

The tract at residues 1–202 (MNYLPIFLDL…GRDSEAEAQL (202 aa)) is precorrin-2 dehydrogenase /sirohydrochlorin ferrochelatase. NAD(+) is bound by residues 22-23 (ET) and 43-44 (PA). At Ser-128 the chain carries Phosphoserine. A uroporphyrinogen-III C-methyltransferase region spans residues 217–479 (GEVYLVGAGP…TPLEAPDHLA (263 aa)). Pro-226 lines the S-adenosyl-L-methionine pocket. Asp-249 (proton acceptor) is an active-site residue. Lys-271 acts as the Proton donor in catalysis. Residues 302–304 (GGD), Ile-307, 332–333 (TA), Met-384, and Gly-413 each bind S-adenosyl-L-methionine.

This sequence in the N-terminal section; belongs to the precorrin-2 dehydrogenase / sirohydrochlorin ferrochelatase family. It in the C-terminal section; belongs to the precorrin methyltransferase family.

It catalyses the reaction uroporphyrinogen III + 2 S-adenosyl-L-methionine = precorrin-2 + 2 S-adenosyl-L-homocysteine + H(+). The catalysed reaction is precorrin-2 + NAD(+) = sirohydrochlorin + NADH + 2 H(+). The enzyme catalyses siroheme + 2 H(+) = sirohydrochlorin + Fe(2+). Its pathway is cofactor biosynthesis; adenosylcobalamin biosynthesis; precorrin-2 from uroporphyrinogen III: step 1/1. It participates in cofactor biosynthesis; adenosylcobalamin biosynthesis; sirohydrochlorin from precorrin-2: step 1/1. It functions in the pathway porphyrin-containing compound metabolism; siroheme biosynthesis; precorrin-2 from uroporphyrinogen III: step 1/1. The protein operates within porphyrin-containing compound metabolism; siroheme biosynthesis; siroheme from sirohydrochlorin: step 1/1. Its pathway is porphyrin-containing compound metabolism; siroheme biosynthesis; sirohydrochlorin from precorrin-2: step 1/1. Functionally, multifunctional enzyme that catalyzes the SAM-dependent methylations of uroporphyrinogen III at position C-2 and C-7 to form precorrin-2 via precorrin-1. Then it catalyzes the NAD-dependent ring dehydrogenation of precorrin-2 to yield sirohydrochlorin. Finally, it catalyzes the ferrochelation of sirohydrochlorin to yield siroheme. The protein is Siroheme synthase of Thiobacillus denitrificans (strain ATCC 25259 / T1).